Here is a 156-residue protein sequence, read N- to C-terminus: Beta-defensin 125 (156 aa).

A signal peptide spans 1–20 (MNILMLTFIICGLLTRVTKG). 3 cysteine pairs are disulfide-bonded: Cys-27-Cys-55, Cys-35-Cys-49, and Cys-39-Cys-56. The propeptide occupies 68–156 (PAFPVIHLED…PPSQTALTHN (89 aa)). The disordered stretch occupies residues 108–156 (GETMTPETNTPETTMPPSEATTPETTMPPSETATSETMPPPSQTALTHN). Residues 109-144 (ETMTPETNTPETTMPPSEATTPETTMPPSETATSET) are compositionally biased toward low complexity.

Belongs to the beta-defensin family.

The protein resides in the secreted. In terms of biological role, has antibacterial activity. This chain is Beta-defensin 125 (DEFB125), found in Homo sapiens (Human).